The primary structure comprises 145 residues: Large ribosomal subunit protein uL13 (145 aa).

This sequence belongs to the universal ribosomal protein uL13 family. As to quaternary structure, part of the 50S ribosomal subunit.

This protein is one of the early assembly proteins of the 50S ribosomal subunit, although it is not seen to bind rRNA by itself. It is important during the early stages of 50S assembly. This Staphylococcus epidermidis (strain ATCC 35984 / DSM 28319 / BCRC 17069 / CCUG 31568 / BM 3577 / RP62A) protein is Large ribosomal subunit protein uL13.